The chain runs to 353 residues: Lipase ZK262.3 (353 aa).

The first 22 residues, 1-22, serve as a signal peptide directing secretion; it reads MPKNLRFSVFLLFLLCINSVFG. N-linked (GlcNAc...) asparagine glycans are attached at residues Asn32 and Asn64. Ser163 (nucleophile) is an active-site residue. Residue Asp221 is the Charge relay system of the active site. A glycan (N-linked (GlcNAc...) asparagine) is linked at Asn267. Cysteines 277 and 288 form a disulfide. The active-site Charge relay system is His306.

This sequence belongs to the AB hydrolase superfamily. Lipase family.

The protein resides in the secreted. Probable lipase. In Caenorhabditis elegans, this protein is Lipase ZK262.3.